Consider the following 1001-residue polypeptide: RNA-binding protein 12B (1001 aa).

Ser-98, Ser-101, and Ser-112 each carry phosphoserine. Lys-114 participates in a covalent cross-link: Glycyl lysine isopeptide (Lys-Gly) (interchain with G-Cter in SUMO2). Residues Asn-119–Gln-128 are compositionally biased toward polar residues. Residues Asn-119 to Thr-147 are disordered. A Glycyl lysine isopeptide (Lys-Gly) (interchain with G-Cter in SUMO2) cross-link involves residue Lys-151. An RRM 1 domain is found at Pro-155 to Glu-230. The span at Leu-247–Arg-262 shows a compositional bias: basic and acidic residues. Residues Leu-247–Ser-278 form a disordered region. 2 positions are modified to phosphoserine: Ser-250 and Ser-254. The segment covering His-263–Ser-278 has biased composition (basic residues). The residue at position 276 (Thr-276) is a Phosphothreonine. Residues Ser-278, Ser-280, Ser-292, and Ser-294 each carry the phosphoserine modification. The 77-residue stretch at Phe-284–Arg-360 folds into the RRM 2 domain. Lys-319 is modified (N6-acetyllysine). Lys-335 participates in a covalent cross-link: Glycyl lysine isopeptide (Lys-Gly) (interchain with G-Cter in SUMO2). Residue Ser-377 is modified to Phosphoserine. In terms of domain architecture, RRM 3 spans Leu-400–Glu-477. Residues Lys-514 and Lys-541 each participate in a glycyl lysine isopeptide (Lys-Gly) (interchain with G-Cter in SUMO2) cross-link. A disordered region spans residues Gln-544–Phe-587. Phosphoserine is present on residues Ser-575, Ser-591, and Ser-638. The span at Leu-631–Ser-881 shows a compositional bias: basic and acidic residues. Positions Leu-631–His-882 are disordered. Residue Thr-640 is modified to Phosphothreonine. A phosphoserine mark is found at Ser-710 and Ser-718. A Glycyl lysine isopeptide (Lys-Gly) (interchain with G-Cter in SUMO2) cross-link involves residue Lys-895. An RRM 4 domain is found at Thr-925–Leu-1001.

In Homo sapiens (Human), this protein is RNA-binding protein 12B (RBM12B).